The chain runs to 1057 residues: Carbamoyl phosphate synthase large chain (1057 aa).

Positions 1 to 401 are carboxyphosphate synthetic domain; that stretch reads MPKRDDIKTI…SLLKAIRSLE (401 aa). ATP contacts are provided by arginine 129, arginine 169, glycine 175, glycine 176, lysine 208, isoleucine 210, glutamate 215, glycine 241, isoleucine 242, histidine 243, glutamine 284, and glutamate 298. Residues 133–327 form the ATP-grasp 1 domain; it reads RTLMNDLNVP…IAKLAAKIAV (195 aa). Mg(2+) contacts are provided by glutamine 284, glutamate 298, and asparagine 300. Mn(2+) contacts are provided by glutamine 284, glutamate 298, and asparagine 300. An oligomerization domain region spans residues 402–546; sequence YGVHHLGLSN…YGTYEYENES (145 aa). Positions 547 to 929 are carbamoyl phosphate synthetic domain; that stretch reads IVTDKEKILV…ALYKGLTGSG (383 aa). Positions 671 to 861 constitute an ATP-grasp 2 domain; that stretch reads EALLREIAVP…MAQLAMRAIM (191 aa). Arginine 707, arginine 746, leucine 748, glutamate 752, glycine 777, valine 778, histidine 779, serine 780, glutamine 820, and glutamate 832 together coordinate ATP. Mg(2+) contacts are provided by glutamine 820, glutamate 832, and asparagine 834. Positions 820, 832, and 834 each coordinate Mn(2+). Positions 930–1057 constitute an MGS-like domain; it reads FEVKDHGTVL…ESMTFTMRNV (128 aa). Positions 930–1057 are allosteric domain; it reads FEVKDHGTVL…ESMTFTMRNV (128 aa).

It belongs to the CarB family. As to quaternary structure, composed of two chains; the small (or glutamine) chain promotes the hydrolysis of glutamine to ammonia, which is used by the large (or ammonia) chain to synthesize carbamoyl phosphate. Tetramer of heterodimers (alpha,beta)4. It depends on Mg(2+) as a cofactor. The cofactor is Mn(2+).

The enzyme catalyses hydrogencarbonate + L-glutamine + 2 ATP + H2O = carbamoyl phosphate + L-glutamate + 2 ADP + phosphate + 2 H(+). The catalysed reaction is hydrogencarbonate + NH4(+) + 2 ATP = carbamoyl phosphate + 2 ADP + phosphate + 2 H(+). It functions in the pathway amino-acid biosynthesis; L-arginine biosynthesis; carbamoyl phosphate from bicarbonate: step 1/1. Its pathway is pyrimidine metabolism; UMP biosynthesis via de novo pathway; (S)-dihydroorotate from bicarbonate: step 1/3. Functionally, large subunit of the glutamine-dependent carbamoyl phosphate synthetase (CPSase). CPSase catalyzes the formation of carbamoyl phosphate from the ammonia moiety of glutamine, carbonate, and phosphate donated by ATP, constituting the first step of 2 biosynthetic pathways, one leading to arginine and/or urea and the other to pyrimidine nucleotides. The large subunit (synthetase) binds the substrates ammonia (free or transferred from glutamine from the small subunit), hydrogencarbonate and ATP and carries out an ATP-coupled ligase reaction, activating hydrogencarbonate by forming carboxy phosphate which reacts with ammonia to form carbamoyl phosphate. The protein is Carbamoyl phosphate synthase large chain of Staphylococcus epidermidis (strain ATCC 12228 / FDA PCI 1200).